Here is an 88-residue protein sequence, read N- to C-terminus: Small ribosomal subunit protein bS20 (88 aa).

Belongs to the bacterial ribosomal protein bS20 family.

Functionally, binds directly to 16S ribosomal RNA. This Clostridium botulinum (strain 657 / Type Ba4) protein is Small ribosomal subunit protein bS20.